A 1100-amino-acid polypeptide reads, in one-letter code: Formin-like protein 1 (1100 aa).

Residues 1 to 13 are compositionally biased toward low complexity; the sequence is MGNAAGSAEQPAG. Disordered stretches follow at residues 1–31, 167–200, 446–474, and 510–635; these read MGNA…PMPA, STDN…PKSR, RFSE…TRPS, and TPSG…AKKP. G2 is lipidated: N-myristoyl glycine. S7 carries the post-translational modification Phosphoserine. The segment covering 14-28 has biased composition (pro residues); it reads PAAPPPKQPAPPKQP. The GBD/FH3 domain maps to 27–468; that stretch reads QPMPAAGELE…PPEPEKAPPA (442 aa). A Phosphoserine modification is found at S184. Positions 517–538 are enriched in low complexity; sequence PTPGVPTGSPSPDLAPAAEPAP. The span at 539 to 615 shows a compositional bias: pro residues; the sequence is GAAPPPPPPL…PPPPPPPGGP (77 aa). Residues S624 and S693 each carry the phosphoserine modification. The 392-residue stretch at 632–1023 folds into the FH2 domain; that stretch reads AKKPIQTKFR…QEAGADTPGK (392 aa). The disordered stretch occupies residues 1008–1037; sequence KKEAAAQEAGADTPGKGEPPAPKSPPKARR. Positions 1013–1023 are enriched in low complexity; that stretch reads AQEAGADTPGK. S1031 is modified (phosphoserine). Positions 1059-1090 constitute a DAD domain; the sequence is SDRDGAIEDIITVIKTVPFTARTGKRTSRLLC.

The protein belongs to the formin homology family. As to quaternary structure, interacts with RAC1, PFN1 and PFN2. Interacts (activated by RAC1) with SRGAP2 (via SH3 domain); regulates the actin filament severing activity of FMNL1. Myristoylation mediates membrane localization and blebbing. In terms of tissue distribution, expressed in heart, brain, placenta, lung, liver, skeletal muscle, kidney and pancreas.

The protein resides in the cytoplasm. It localises to the cell membrane. Its subcellular location is the cytoplasmic vesicle. It is found in the phagosome. The protein localises to the cell cortex. The protein resides in the cell projection. It localises to the bleb. Its function is as follows. May play a role in the control of cell motility and survival of macrophages. Plays a role in the regulation of cell morphology and cytoskeletal organization. Required in the cortical actin filament dynamics and cell shape. This is Formin-like protein 1 (FMNL1) from Homo sapiens (Human).